The following is a 164-amino-acid chain: Phosphopantetheine adenylyltransferase (164 aa).

This sequence belongs to the eukaryotic CoaD family.

The protein localises to the cytoplasm. It catalyses the reaction (R)-4'-phosphopantetheine + ATP + H(+) = 3'-dephospho-CoA + diphosphate. The protein operates within cofactor biosynthesis; coenzyme A biosynthesis. Functionally, reversibly transfers an adenylyl group from ATP to 4'-phosphopantetheine, yielding dephospho-CoA (dPCoA) and pyrophosphate. This chain is Phosphopantetheine adenylyltransferase, found in Methanothermobacter thermautotrophicus (strain ATCC 29096 / DSM 1053 / JCM 10044 / NBRC 100330 / Delta H) (Methanobacterium thermoautotrophicum).